The following is a 305-amino-acid chain: MNTRDVGKVAVLLGGRSAEREISLRSGQAVLAALQRSRVNAHAFDPAGQPLENLLQQGFDRVFIALHGRYGEDGSVQGALELMELPYTGSGILASALAMDKWRTKMIWQAAGINTPDYVMLDASSRFRDVADRLGLPLIIKPAREGSTLGLNKVDNEQDFRSAYQAAAEYDSLVLAEQFIQGIELTAAILDDMPLPLVRIDVAEGLYDYQAKYFSESTRYTCPSGLSAALTTRIQEQALYAHRILGCTGWSRVDLILDENEQPFFLETNTSPGMTDHSLVPMAAKAAGISFDELVVQILELSCEH.

The ATP-grasp domain maps to 105 to 300 (KMIWQAAGIN…FDELVVQILE (196 aa)). 131 to 186 (ADRLGLPLIIKPAREGSTLGLNKVDNEQDFRSAYQAAAEYDSLVLAEQFIQGIELT) is a binding site for ATP. Residues Asp254, Glu267, and Asn269 each coordinate Mg(2+).

The protein belongs to the D-alanine--D-alanine ligase family. Mg(2+) is required as a cofactor. Mn(2+) serves as cofactor.

Its subcellular location is the cytoplasm. The enzyme catalyses 2 D-alanine + ATP = D-alanyl-D-alanine + ADP + phosphate + H(+). Its pathway is cell wall biogenesis; peptidoglycan biosynthesis. Functionally, cell wall formation. The protein is D-alanine--D-alanine ligase of Nitrosomonas europaea (strain ATCC 19718 / CIP 103999 / KCTC 2705 / NBRC 14298).